The primary structure comprises 386 residues: Zinc finger protein 385A (386 aa).

The segment at 74–98 adopts a Matrin-type 1 zinc-finger fold; it reads ISCNVCQIRFNSQSQAEAHYKGNRH. Positions 88–193 are disordered; the sequence is QAEAHYKGNR…ASLPGGSKEE (106 aa). Residues 103–121 show a composition bias toward basic and acidic residues; sequence KGIEAAKTRGREPSVRESG. Residues 145–351 are necessary for binding to ITPR1, CEBPA and p53/TP53 mRNAs; that stretch reads NGLGPAPGSP…AGSPLSLRPA (207 aa). Position 185 is a phosphoserine (S185). Residues 201 to 225 form a Matrin-type 2 zinc finger; the sequence is LYCALCKVAVNSLSQLEAHNKGTKH. Position 248 is a phosphothreonine (T248). The segment at 261–285 adopts a Matrin-type 3 zinc-finger fold; it reads FHCEICNVKVNSEVQLKQHISSRRH. The segment at 279–305 is disordered; that stretch reads HISSRRHRDGVAGKPNPLLSRHKKPRG.

Interacts with p53/TP53; the interaction is direct and enhances p53/TP53 transactivation functions on cell-cycle arrest target genes, resulting in growth arrest. Interacts with ELAVL1; the interaction is indirect, mRNA-dependent and may regulate p53/TP53 expression. In terms of processing, ubiquitinated upon prolonged exposure to genotoxic stress, which leads to proteasomal degradation of ZNF385A and releases p53/TP53 from cell-cycle arrest target gene promoters. As to expression, expressed in brain and testis (at protein level). In brain, the expression is located to olfactory bulb, cerebral cortex, hippocampus, satellite cells and Purkinje cells of the cerebellum molecular layer. Detected in bone marrow, white and brown adipose tissue, lung and at lower levels in the thymus.

The protein localises to the cytoplasm. The protein resides in the nucleus. Its subcellular location is the nucleolus. It localises to the cell projection. It is found in the dendrite. In terms of biological role, RNA-binding protein that affects the localization and the translation of a subset of mRNA. May play a role in adipogenesis through binding to the 3'-UTR of CEBPA mRNA and regulation of its translation. Targets ITPR1 mRNA to dendrites in Purkinje cells, and may regulate its activity-dependent translation. With ELAVL1, binds the 3'-UTR of p53/TP53 mRNAs to control their nuclear export induced by CDKN2A. Hence, may regulate p53/TP53 expression and mediate in part the CDKN2A anti-proliferative activity. May also bind CCNB1 mRNA. Alternatively, may also regulate p53/TP53 activity through direct protein-protein interaction. Interacts with p53/TP53 and promotes cell-cycle arrest over apoptosis enhancing preferentially the DNA binding and transactivation of p53/TP53 on cell-cycle arrest target genes over proapoptotic target genes. May also regulate the ubiquitination and stability of CDKN1A promoting DNA damage-induced cell cycle arrest. Also plays a role in megakaryocytes differentiation. The chain is Zinc finger protein 385A (Znf385a) from Mus musculus (Mouse).